The following is a 450-amino-acid chain: Glutamyl-tRNA(Gln) amidotransferase subunit A, mitochondrial (450 aa).

Residues lysine 47 and serine 122 each act as charge relay system in the active site. Serine 146 serves as the catalytic Acyl-ester intermediate.

This sequence belongs to the amidase family. GatA subfamily. Subunit of the heterotrimeric GatFAB amidotransferase (AdT) complex, composed of A, B and F subunits.

The protein localises to the mitochondrion. It carries out the reaction L-glutamyl-tRNA(Gln) + L-glutamine + ATP + H2O = L-glutaminyl-tRNA(Gln) + L-glutamate + ADP + phosphate + H(+). Functionally, allows the formation of correctly charged Gln-tRNA(Gln) through the transamidation of misacylated Glu-tRNA(Gln) in the mitochondria. The reaction takes place in the presence of glutamine and ATP through an activated gamma-phospho-Glu-tRNA(Gln). The polypeptide is Glutamyl-tRNA(Gln) amidotransferase subunit A, mitochondrial (Candida albicans (strain SC5314 / ATCC MYA-2876) (Yeast)).